A 315-amino-acid polypeptide reads, in one-letter code: Deoxyribonuclease-1-like 1 (315 aa).

Positions 1 to 29 (MDSSGGFQKHTCGHALLLLLLLLAGGAEA) are cleaved as a signal peptide. Residues Glu108 and His159 contribute to the active site. A disulfide bond links Cys198 and Cys235. Asn272 carries N-linked (GlcNAc...) asparagine glycosylation.

The protein belongs to the DNase I family.

The protein resides in the endoplasmic reticulum. This Sus scrofa (Pig) protein is Deoxyribonuclease-1-like 1 (DNASE1L1).